The sequence spans 35 residues: MLVVIMFFIAFAFCSWLSYSYLRPYISTKELNKSR.

The helical transmembrane segment at Leu-2–Leu-22 threads the bilayer. Topologically, residues Arg-23–Arg-35 are virion surface.

The protein belongs to the orthopoxvirus OPG076 family. As to quaternary structure, component of the entry fusion complex (EFC) composed of OPG053, OPG076, OPG086, OPG094, OPG095, OPG099, OPG107, OPG143, OPG104, OPG147 and OPG155. Except for OPG095 and OPG053, each of the EFC proteins is required for assembly or stability of the complex. Post-translationally, unglycosylated because produced in viral factories instead of the classic ER -Golgi route.

The protein localises to the virion membrane. Component of the entry fusion complex (EFC), which consists of 11 proteins. During cell infection, this complex mediates entry of the virion core into the host cytoplasm by a two-step mechanism consisting of lipid mixing of the viral and cellular membranes and subsequent pore formation. The chain is Entry-fusion complex protein OPG076 (OPG076) from Vaccinia virus (strain Copenhagen) (VACV).